The following is a 126-amino-acid chain: Holo-[acyl-carrier-protein] synthase (126 aa).

Residues D8 and E57 each contribute to the Mg(2+) site.

The protein belongs to the P-Pant transferase superfamily. AcpS family. The cofactor is Mg(2+).

The protein resides in the cytoplasm. It carries out the reaction apo-[ACP] + CoA = holo-[ACP] + adenosine 3',5'-bisphosphate + H(+). Its function is as follows. Transfers the 4'-phosphopantetheine moiety from coenzyme A to a Ser of acyl-carrier-protein. The chain is Holo-[acyl-carrier-protein] synthase from Leptospira interrogans serogroup Icterohaemorrhagiae serovar copenhageni (strain Fiocruz L1-130).